A 237-amino-acid chain; its full sequence is Splicing factor U2AF 35 kDa subunit (237 aa).

Ala-2 carries the N-acetylalanine modification. The C3H1-type 1 zinc finger occupies 12 to 40 (EKDKVNCSFYFKIGACRHGDRCSRLHNKP). Position 39 is an N6-methyllysine (Lys-39). Phosphoserine occurs at positions 61 and 145. Residues 65-147 (LRCAVSDVEM…QPIHAELSPV (83 aa)) enclose the RRM domain. Residues 149–176 (DFREACCRQYEMGECTRGGFCNFMHLKP) form a C3H1-type 2 zinc finger. Residue Arg-165 is modified to Omega-N-methylarginine. The interval 185–237 (LYGRRRKKHRSRSRSRERRSRSRDRGRGGGGGGGGGRERDRRRSRDRERSGRF) is disordered. Positions 188–208 (RRRKKHRSRSRSRERRSRSRD) are enriched in basic residues. A compositionally biased stretch (basic and acidic residues) spans 220–237 (GRERDRRRSRDRERSGRF).

The protein belongs to the splicing factor SR family. As to quaternary structure, identified in the spliceosome C complex. Heterodimer with U2AF2. Interacts (via RS domain) with PHF5A (via N-terminus). Interacts with ZRANB2. Interacts with SDE2. Interacts with SF3B1.

It is found in the nucleus. The protein resides in the nucleus speckle. Plays a critical role in both constitutive and enhancer-dependent splicing by mediating protein-protein interactions and protein-RNA interactions required for accurate 3'-splice site selection. Recruits U2 snRNP to the branch point. Directly mediates interactions between U2AF2 and proteins bound to the enhancers and thus may function as a bridge between U2AF2 and the enhancer complex to recruit it to the adjacent intron. In Bos taurus (Bovine), this protein is Splicing factor U2AF 35 kDa subunit (U2AF1).